Here is a 121-residue protein sequence, read N- to C-terminus: Basic phospholipase A2 homolog 2 (121 aa).

Intrachain disulfides connect cysteine 26/cysteine 115, cysteine 28/cysteine 44, cysteine 43/cysteine 95, cysteine 49/cysteine 121, cysteine 50/cysteine 88, cysteine 57/cysteine 81, and cysteine 75/cysteine 86. The interval 105–117 is important for membrane-damaging activities in eukaryotes and bacteria; heparin-binding; that stretch reads KKYRYHLKPLCKK.

It belongs to the phospholipase A2 family. Group II subfamily. K49 sub-subfamily. In terms of assembly, homodimer; non-covalently linked (probable alternative/compact dimer conformation in solution). As to expression, expressed by the venom gland.

Its subcellular location is the secreted. In terms of biological role, snake venom phospholipase A2 homolog that lacks enzymatic activity. Is myotoxic and displays edema-inducing activities in mouse paw. Also displays cytotoxic activity against myotubes. A model of myotoxic mechanism has been proposed: an apo Lys49-PLA2 is activated by the entrance of a hydrophobic molecule (e.g. fatty acid) at the hydrophobic channel of the protein leading to a reorientation of a monomer. This reorientation causes a transition between 'inactive' to 'active' states, causing alignment of C-terminal and membrane-docking sites (MDoS) side-by-side and putting the membrane-disruption sites (MDiS) in the same plane, exposed to solvent and in a symmetric position for both monomers. The MDoS region stabilizes the toxin on membrane by the interaction of charged residues with phospholipid head groups. Subsequently, the MDiS region destabilizes the membrane with penetration of hydrophobic residues. This insertion causes a disorganization of the membrane, allowing an uncontrolled influx of ions (i.e. calcium and sodium), and eventually triggering irreversible intracellular alterations and cell death. The polypeptide is Basic phospholipase A2 homolog 2 (Bothrops brazili (Brazil's lancehead)).